The following is a 127-amino-acid chain: Large ribosomal subunit protein eL8 (127 aa).

Belongs to the eukaryotic ribosomal protein eL8 family. As to quaternary structure, part of the 50S ribosomal subunit. Probably part of the RNase P complex.

It is found in the cytoplasm. Functionally, multifunctional RNA-binding protein that recognizes the K-turn motif in ribosomal RNA, the RNA component of RNase P, box H/ACA, box C/D and box C'/D' sRNAs. The protein is Large ribosomal subunit protein eL8 of Hyperthermus butylicus (strain DSM 5456 / JCM 9403 / PLM1-5).